A 388-amino-acid chain; its full sequence is WD repeat-containing protein 55 (388 aa).

Acidic residues predominate over residues 1 to 20 (MDPTCEESPAEDSNNEEEDL). A disordered region spans residues 1–33 (MDPTCEESPAEDSNNEEEDLDSTKAAPRIRDTP). WD repeat units follow at residues 37–76 (VLEA…GETK), 83–122 (HHLK…LERR), 126–164 (AHSA…PLMD), 167–206 (QHEE…FELL), 209–248 (PQSG…ATSD), 251–290 (ALRA…VVGT), and 293–333 (QHAG…TVVV). A Phosphoserine modification is found at S355. Residues 364-388 (REDEEDAKAPEEVVRESDDDDDDSD) form a disordered region. The segment covering 370 to 379 (AKAPEEVVRE) has biased composition (basic and acidic residues).

The protein belongs to the WD repeat WDR55 family.

It localises to the nucleus. It is found in the nucleolus. Its subcellular location is the cytoplasm. In terms of biological role, nucleolar protein that acts as a modulator of rRNA synthesis. Plays a central role during organogenesis. In Mus musculus (Mouse), this protein is WD repeat-containing protein 55 (Wdr55).